We begin with the raw amino-acid sequence, 107 residues long: MQLSTTPTLEGFTITEYCGVVTGEAILGANIFRDFFAGVRDIVGGRSGAYEKELRKARLIAFKELEEQAKELGANAVVGIDIDYETVGKDSSMLMVTVSGTAVKVSR.

The protein belongs to the UPF0145 family.

The protein is UPF0145 protein Spro_1658 of Serratia proteamaculans (strain 568).